The sequence spans 177 residues: MSRKSGSRSSSKRSKKSGGGSNVFDMFTQRQVAEFKEGFQLMDRDKDGVIGKTDLRGTFDEIGRIATDQELDEMLADAPAPINFTMLLNMFAERQTGESDDDDVVAKAFLAFADEEGNIDCDTFRHALMTWGDKFSSQEADDALDQMDIDDGGKIDVQGVIQMLTAGGGDDAAAEEA.

Residues 1–16 show a composition bias toward basic residues; it reads MSRKSGSRSSSKRSKK. The disordered stretch occupies residues 1–24; the sequence is MSRKSGSRSSSKRSKKSGGGSNVF. 6 igE-binding epitope regions span residues 13–30, 22–48, 49–66, 58–90, 79–99, and 118–141; these read RSKK…FTQR, NVFD…DKDG, VIGK…GRIA, TFDE…LLNM, PAPI…TGES, and NIDC…QEAD. Positions 30 to 65 constitute an EF-hand 1 domain; it reads RQVAEFKEGFQLMDRDKDGVIGKTDLRGTFDEIGRI. Residues Asp-43, Asp-45, Asp-47, and Asp-54 each contribute to the Ca(2+) site. The region spanning 135–170 is the EF-hand 2 domain; it reads FSSQEADDALDQMDIDDGGKIDVQGVIQMLTAGGGD.

In terms of assembly, myosin is a hexamer of 2 heavy chains and 4 light chains. As to expression, expressed in tail muscle (at protein level).

This Penaeus vannamei (Whiteleg shrimp) protein is Myosin regulatory light chain 2.